Reading from the N-terminus, the 194-residue chain is Peptidyl-tRNA hydrolase (194 aa).

Position 19 (Y19) interacts with tRNA. Catalysis depends on H24, which acts as the Proton acceptor. F69, N71, and N117 together coordinate tRNA.

Belongs to the PTH family. In terms of assembly, monomer.

The protein resides in the cytoplasm. The enzyme catalyses an N-acyl-L-alpha-aminoacyl-tRNA + H2O = an N-acyl-L-amino acid + a tRNA + H(+). Hydrolyzes ribosome-free peptidyl-tRNAs (with 1 or more amino acids incorporated), which drop off the ribosome during protein synthesis, or as a result of ribosome stalling. Functionally, catalyzes the release of premature peptidyl moieties from peptidyl-tRNA molecules trapped in stalled 50S ribosomal subunits, and thus maintains levels of free tRNAs and 50S ribosomes. The sequence is that of Peptidyl-tRNA hydrolase from Neorickettsia sennetsu (strain ATCC VR-367 / Miyayama) (Ehrlichia sennetsu).